The sequence spans 927 residues: Protein LONGIFOLIA 1 (927 aa).

Disordered stretches follow at residues Thr41–Arg198, Tyr210–Arg257, Ala460–Asn588, and Tyr605–Met626. The segment covering Ser86–Ser114 has biased composition (low complexity). The segment covering Gln115–Glu125 has biased composition (polar residues). A compositionally biased stretch (basic and acidic residues) spans Asp146–Glu165. Positions Lys182 to Trp193 are enriched in polar residues. Positions Tyr210–Pro226 are enriched in basic and acidic residues. Positions Ser232–Ser245 are enriched in low complexity. 2 stretches are compositionally biased toward polar residues: residues Gln483–Ser500 and Asn538–Ala553. 2 stretches are compositionally biased toward basic and acidic residues: residues Ser569–Arg584 and Tyr605–Thr616.

As to quaternary structure, interacts (via C-terminus) with TON1A and TON1B. In terms of tissue distribution, expressed in roots, petioles, leaf blades and floral organs.

It is found in the nucleus. In association with LNG2, regulates leaf morphology by promoting longitudinal polar cell elongation independently of ROT3. In Arabidopsis thaliana (Mouse-ear cress), this protein is Protein LONGIFOLIA 1 (LNG1).